The sequence spans 583 residues: Asparagine synthetase, root [glutamine-hydrolyzing] (583 aa).

Cysteine 2 (for GATase activity) is an active-site residue. In terms of domain architecture, Glutamine amidotransferase type-2 spans 2-185 (CGILAVLGCS…PGHLYSSKDS (184 aa)). Residues 50–54 (RLAIV), 75–77 (NGE), and aspartate 98 contribute to the L-glutamine site. Residues leucine 231, valine 267, and 341–342 (SG) contribute to the ATP site. The Asparagine synthetase domain occupies 237 to 516 (DSSLVASITS…PQNSARLTVP (280 aa)).

In terms of tissue distribution, roots.

It catalyses the reaction L-aspartate + L-glutamine + ATP + H2O = L-asparagine + L-glutamate + AMP + diphosphate + H(+). Its pathway is amino-acid biosynthesis; L-asparagine biosynthesis; L-asparagine from L-aspartate (L-Gln route): step 1/1. In Pisum sativum (Garden pea), this protein is Asparagine synthetase, root [glutamine-hydrolyzing] (AS2).